A 522-amino-acid chain; its full sequence is Glutathione reductase, mitochondrial (522 aa).

The transit peptide at 1–43 directs the protein to the mitochondrion; the sequence is MALLPRALSAGAGPSWRRAARAFRGFLLLLPEPAALTRALSRA. FAD contacts are provided by S74 and G75. S74 is a binding site for glutathione. R81 is a glutathione binding site. E94 contacts FAD. An N6-acetyllysine modification is found at K97. 3 residues coordinate FAD: T101, C102, and K110. An intrachain disulfide couples C102 to C107. Y158 is a binding site for glutathione. Position 174 (A174) interacts with FAD. Positions 239, 242, 245, 262, 268, and 334 each coordinate NADP(+). Position 375 (D375) interacts with FAD. Position 381 (L381) interacts with NADP(+). An FAD-binding site is contributed by T383. R391 is a binding site for glutathione. Position 414 (V414) interacts with NADP(+). H511 is an FAD binding site. H511 acts as the Proton acceptor in catalysis.

Belongs to the class-I pyridine nucleotide-disulfide oxidoreductase family. As to quaternary structure, homodimer; disulfide-linked. The cofactor is FAD.

It localises to the mitochondrion. The protein localises to the cytoplasm. It catalyses the reaction 2 glutathione + NADP(+) = glutathione disulfide + NADPH + H(+). Catalyzes the reduction of glutathione disulfide (GSSG) to reduced glutathione (GSH). Constitutes the major mechanism to maintain a high GSH:GSSG ratio in the cytosol. This chain is Glutathione reductase, mitochondrial (GSR), found in Homo sapiens (Human).